The following is a 647-amino-acid chain: DNA mismatch repair protein MutL (647 aa).

2 disordered regions span residues 356–391 (EGSQ…SSIS) and 407–428 (PRPQ…EALP). Positions 413 to 423 (LRPQYQGSVTS) are enriched in polar residues.

This sequence belongs to the DNA mismatch repair MutL/HexB family.

Functionally, this protein is involved in the repair of mismatches in DNA. It is required for dam-dependent methyl-directed DNA mismatch repair. May act as a 'molecular matchmaker', a protein that promotes the formation of a stable complex between two or more DNA-binding proteins in an ATP-dependent manner without itself being part of a final effector complex. The protein is DNA mismatch repair protein MutL of Citrifermentans bemidjiense (strain ATCC BAA-1014 / DSM 16622 / JCM 12645 / Bem) (Geobacter bemidjiensis).